The primary structure comprises 391 residues: Cytochrome P450 165A3 (391 aa).

The tract at residues 1 to 22 is disordered; sequence MFEEKNALRGTEIHRRERFDPG. Heme is bound at residue Cys-342.

The protein belongs to the cytochrome P450 family. Requires heme as cofactor.

Its pathway is antibiotic biosynthesis; vancomycin biosynthesis. Involved in the coupling of aromatic side chains of the heptapeptide of vancomycin. The sequence is that of Cytochrome P450 165A3 (cyp165A3) from Amycolatopsis orientalis (Nocardia orientalis).